Consider the following 200-residue polypeptide: Glycerol-3-phosphate acyltransferase (200 aa).

A run of 5 helical transmembrane segments spans residues 2 to 22, 51 to 71, 84 to 104, 114 to 134, and 159 to 179; these read FNIS…AVIV, KAAA…VLLA, AIAA…FFGF, LGVL…IWLV, and FFMP…LVLF.

Belongs to the PlsY family. Probably interacts with PlsX.

It is found in the cell inner membrane. The enzyme catalyses an acyl phosphate + sn-glycerol 3-phosphate = a 1-acyl-sn-glycero-3-phosphate + phosphate. It participates in lipid metabolism; phospholipid metabolism. In terms of biological role, catalyzes the transfer of an acyl group from acyl-phosphate (acyl-PO(4)) to glycerol-3-phosphate (G3P) to form lysophosphatidic acid (LPA). This enzyme utilizes acyl-phosphate as fatty acyl donor, but not acyl-CoA or acyl-ACP. The chain is Glycerol-3-phosphate acyltransferase from Neisseria meningitidis serogroup C (strain 053442).